The sequence spans 96 residues: UPF0358 protein Aflv_1873 (96 aa).

It belongs to the UPF0358 family.

The chain is UPF0358 protein Aflv_1873 from Anoxybacillus flavithermus (strain DSM 21510 / WK1).